The chain runs to 751 residues: WD repeat-containing protein 91 (751 aa).

Residues 188–212 (IQEENESLRHKLFALQAESSRMKKE) adopt a coiled-coil conformation. The interval 264–395 (LSQSKKGPAR…ASSTESVGVR (132 aa)) is disordered. Residues 278–287 (SGASPTQTGS) show a composition bias toward polar residues. Residues 334–346 (RLQEHGKERRELL) are compositionally biased toward basic and acidic residues. Over residues 377–391 (QAETSTKMPASSTES) the composition is skewed to polar residues. 7 WD repeats span residues 410–449 (EHHS…QTKA), 452–492 (ISKS…NLCE), 497–559 (EDMP…QQLQ), 564–603 (PEPI…CAMS), 606–645 (AHDG…LKIS), 668–706 (VQFP…KVLE), and 713–751 (GHRA…AQKS).

This sequence belongs to the WD repeat WDR91 family.

It is found in the early endosome membrane. It localises to the late endosome membrane. Its function is as follows. Functions as a negative regulator of the PI3 kinase/PI3K activity associated with endosomal membranes. By modifying the phosphatidylinositol 3-phosphate/PtdInsP3 content of endosomal membranes may regulate endosome fusion, recycling, sorting and early to late endosome transport. This chain is WD repeat-containing protein 91, found in Gallus gallus (Chicken).